The chain runs to 369 residues: Anhydro-N-acetylmuramic acid kinase (369 aa).

12 to 19 (GTSLDGVD) contributes to the ATP binding site.

It belongs to the anhydro-N-acetylmuramic acid kinase family.

It carries out the reaction 1,6-anhydro-N-acetyl-beta-muramate + ATP + H2O = N-acetyl-D-muramate 6-phosphate + ADP + H(+). The protein operates within amino-sugar metabolism; 1,6-anhydro-N-acetylmuramate degradation. It functions in the pathway cell wall biogenesis; peptidoglycan recycling. In terms of biological role, catalyzes the specific phosphorylation of 1,6-anhydro-N-acetylmuramic acid (anhMurNAc) with the simultaneous cleavage of the 1,6-anhydro ring, generating MurNAc-6-P. Is required for the utilization of anhMurNAc either imported from the medium or derived from its own cell wall murein, and thus plays a role in cell wall recycling. This is Anhydro-N-acetylmuramic acid kinase from Escherichia coli O1:K1 / APEC.